Here is a 180-residue protein sequence, read N- to C-terminus: Large ribosomal subunit protein uL5 (180 aa).

The protein belongs to the universal ribosomal protein uL5 family. Part of the 50S ribosomal subunit; part of the 5S rRNA/L5/L18/L25 subcomplex. Contacts the 5S rRNA and the P site tRNA. Forms a bridge to the 30S subunit in the 70S ribosome.

Its function is as follows. This is one of the proteins that bind and probably mediate the attachment of the 5S RNA into the large ribosomal subunit, where it forms part of the central protuberance. In the 70S ribosome it contacts protein S13 of the 30S subunit (bridge B1b), connecting the 2 subunits; this bridge is implicated in subunit movement. Contacts the P site tRNA; the 5S rRNA and some of its associated proteins might help stabilize positioning of ribosome-bound tRNAs. The sequence is that of Large ribosomal subunit protein uL5 from Chlamydia pneumoniae (Chlamydophila pneumoniae).